The following is a 211-amino-acid chain: Guanylate kinase (211 aa).

The region spanning 5–185 (GLLLILSSPS…AEEQLKMILS (181 aa)) is the Guanylate kinase-like domain. 12–19 (SPSGAGKS) is a binding site for ATP.

The protein belongs to the guanylate kinase family.

The protein resides in the cytoplasm. The enzyme catalyses GMP + ATP = GDP + ADP. Functionally, essential for recycling GMP and indirectly, cGMP. The protein is Guanylate kinase of Cereibacter sphaeroides (strain ATCC 17023 / DSM 158 / JCM 6121 / CCUG 31486 / LMG 2827 / NBRC 12203 / NCIMB 8253 / ATH 2.4.1.) (Rhodobacter sphaeroides).